The primary structure comprises 206 residues: Large ribosomal subunit protein uL4 (206 aa).

Over residues 66–77 the composition is skewed to basic residues; the sequence is QKGTGRARHHSA. The disordered stretch occupies residues 66–96; the sequence is QKGTGRARHHSARAPQFRGGGQAHGPVVRSH.

This sequence belongs to the universal ribosomal protein uL4 family. As to quaternary structure, part of the 50S ribosomal subunit.

One of the primary rRNA binding proteins, this protein initially binds near the 5'-end of the 23S rRNA. It is important during the early stages of 50S assembly. It makes multiple contacts with different domains of the 23S rRNA in the assembled 50S subunit and ribosome. In terms of biological role, forms part of the polypeptide exit tunnel. In Brucella anthropi (strain ATCC 49188 / DSM 6882 / CCUG 24695 / JCM 21032 / LMG 3331 / NBRC 15819 / NCTC 12168 / Alc 37) (Ochrobactrum anthropi), this protein is Large ribosomal subunit protein uL4.